Here is a 481-residue protein sequence, read N- to C-terminus: Protein hedgehog (481 aa).

The signal sequence occupies residues Met1–Ser19. A propeptide spanning residues Leu20–Ser90 is cleaved from the precursor. The interval Ser26–His56 is disordered. Cys91 carries the N-palmitoyl cysteine lipid modification. Ca(2+)-binding residues include Glu155, Glu156, Asp161, Thr191, Glu192, Asp195, and Asp197. Gly264 is lipidated: Cholesterol glycine ester.

The protein belongs to the hedgehog family. Interacts with shf. The C-terminal part of the hedgehog protein precursor displays an autoproteolysis activity that results in the cleavage of the full-length protein into two parts (N-product and C-product). In addition, the C-terminal part displays a cholesterol transferase activity that results by the covalent attachment of a cholesterol moiety to the C-terminal of the newly generated N-product. The N-product is the active species in both local and long-range signaling, whereas the C-product has no signaling activity. Post-translationally, cholesterylation is required for N-product targeting to lipid rafts and multimerization. In terms of processing, N-palmitoylation by Rasp of the hedgehog N-product, within the secretory pathway, is required for the embryonic and larval patterning activities of the hedgehog signal.

It localises to the nucleus. It is found in the cytoplasm. Its subcellular location is the cell membrane. It carries out the reaction glycyl-L-cysteinyl-[protein] + cholesterol + H(+) = [protein]-C-terminal glycyl cholesterol ester + N-terminal L-cysteinyl-[protein]. In terms of biological role, the C-terminal part of the hedgehog protein precursor displays an autoproteolysis activity that results in the cleavage of the full-length protein into two parts (N-product and C-product). In addition, the C-terminal part displays a cholesterol transferase activity that results by the covalent attachment of a cholesterol moiety to the C-terminal of the newly generated N-product. Once cleaved, the C-product has no signaling activity and diffuses from the cell. Its function is as follows. The dually lipidated hedgehog protein N-product is a morphogen which is essential for a variety of patterning events during development. Establishes the anterior-posterior axis of the embryonic segments and patterns the larval imaginal disks. Binds to the patched (ptc) receptor, which functions in association with smoothened (smo), to activate the transcription of target genes wingless (wg), decapentaplegic (dpp) and ptc. In the absence of hh, ptc represses the constitutive signaling activity of smo through fused (fu). Essential component of a signaling pathway which regulates the Duox-dependent gut immune response to bacterial uracil; required to activate Cad99C-dependent endosome formation, norpA-dependent Ca2+ mobilization and p38 MAPK, which are essential steps in the Duox-dependent production of reactive oxygen species (ROS) in response to intestinal bacterial infection. During photoreceptor differentiation, it up-regulates transcription of Ubr3, which in turn promotes the hh-signaling pathway by mediating the ubiquitination and degradation of cos. The protein is Protein hedgehog of Drosophila hydei (Fruit fly).